Reading from the N-terminus, the 97-residue chain is Ferredoxin-3 (97 aa).

4Fe-4S ferredoxin-type domains follow at residues 18 to 47 (FAES…LKAL) and 65 to 95 (KVMV…HNPL). 8 residues coordinate [4Fe-4S] cluster: Cys-27, Cys-30, Cys-33, Cys-37, Cys-75, Cys-78, Cys-81, and Cys-85.

In terms of assembly, homodimer. It depends on [4Fe-4S] cluster as a cofactor.

Its function is as follows. Ferredoxins are iron-sulfur proteins that transfer electrons in a wide variety of metabolic reactions. The sequence is that of Ferredoxin-3 (fdxB) from Nostoc sp. (strain PCC 7120 / SAG 25.82 / UTEX 2576).